A 721-amino-acid chain; its full sequence is Catalase-peroxidase 1 (721 aa).

The tryptophyl-tyrosyl-methioninium (Trp-Tyr) (with M-249) cross-link spans 98-223 (WHAAGSYRVA…LAAVQMGLIY (126 aa)). His-99 (proton acceptor) is an active-site residue. Positions 223–249 (YVNPEGVNGQPDPLRTAQDVRVTFGRM) form a cross-link, tryptophyl-tyrosyl-methioninium (Tyr-Met) (with W-98). Position 264 (His-264) interacts with heme b.

It belongs to the peroxidase family. Peroxidase/catalase subfamily. Homodimer or homotetramer. The cofactor is heme b. Post-translationally, formation of the three residue Trp-Tyr-Met cross-link is important for the catalase, but not the peroxidase activity of the enzyme.

It catalyses the reaction H2O2 + AH2 = A + 2 H2O. It carries out the reaction 2 H2O2 = O2 + 2 H2O. Bifunctional enzyme with both catalase and broad-spectrum peroxidase activity. The polypeptide is Catalase-peroxidase 1 (Legionella pneumophila (strain Corby)).